The chain runs to 347 residues: Guanine nucleotide-binding protein alpha-5 subunit (347 aa).

A lipid anchor (N-myristoyl glycine) is attached at glycine 2. A lipid anchor (S-palmitoyl cysteine) is attached at cysteine 3. In terms of domain architecture, G-alpha spans 27 to 347 (NETKLLLLGP…KNIFNTIINY (321 aa)). The segment at 30–43 (KLLLLGPGESGKST) is G1 motif. GTP-binding positions include 35 to 42 (GPGESGKS), 170 to 176 (LRSRVRT), 195 to 199 (DVGGQ), 264 to 267 (NKVD), and alanine 319. Serine 42 and threonine 176 together coordinate Mg(2+). The interval 168–176 (DVLRSRVRT) is G2 motif. The G3 motif stretch occupies residues 191–200 (FRMLDVGGQR). The interval 260–267 (IIFFNKVD) is G4 motif. The tract at residues 317-322 (TCAIDT) is G5 motif.

It belongs to the G-alpha family. G(q) subfamily. As to quaternary structure, g proteins are composed of 3 units; alpha, beta and gamma. The alpha chain contains the guanine nucleotide binding site.

In terms of biological role, guanine nucleotide-binding proteins (G proteins) are involved as modulators or transducers in various transmembrane signaling systems. The protein is Guanine nucleotide-binding protein alpha-5 subunit (gpaE) of Dictyostelium discoideum (Social amoeba).